Here is a 257-residue protein sequence, read N- to C-terminus: 2,3,4,5-tetrahydropyridine-2,6-dicarboxylate N-acetyltransferase (257 aa).

Belongs to the transferase hexapeptide repeat family. DapH subfamily.

The enzyme catalyses (S)-2,3,4,5-tetrahydrodipicolinate + acetyl-CoA + H2O = L-2-acetamido-6-oxoheptanedioate + CoA. It functions in the pathway amino-acid biosynthesis; L-lysine biosynthesis via DAP pathway; LL-2,6-diaminopimelate from (S)-tetrahydrodipicolinate (acetylase route): step 1/3. Functionally, catalyzes the transfer of an acetyl group from acetyl-CoA to tetrahydrodipicolinate. The protein is 2,3,4,5-tetrahydropyridine-2,6-dicarboxylate N-acetyltransferase of Lactococcus lactis subsp. cremoris (strain SK11).